The sequence spans 492 residues: Trehalose-6-phosphate synthase (492 aa).

Arginine 25 lines the D-glucose 6-phosphate pocket. 45–46 (GG) serves as a coordination point for UDP-alpha-D-glucose. Residues tyrosine 101 and aspartate 155 each coordinate D-glucose 6-phosphate. Positions 297 and 302 each coordinate UDP-alpha-D-glucose. Arginine 335 contributes to the D-glucose 6-phosphate binding site. 400 to 404 (LVAKE) contacts UDP-alpha-D-glucose.

It belongs to the glycosyltransferase 20 family. Homotetramer.

It carries out the reaction ADP-alpha-D-glucose + D-glucose 6-phosphate = alpha,alpha-trehalose 6-phosphate + ADP + H(+). The catalysed reaction is CDP-alpha-D-glucose + D-glucose 6-phosphate = alpha,alpha-trehalose 6-phosphate + CDP + H(+). The enzyme catalyses GDP-alpha-D-glucose + D-glucose 6-phosphate = alpha,alpha-trehalose 6-phosphate + GDP + H(+). It catalyses the reaction TDP-alpha-D-glucose + D-glucose 6-phosphate = 5-methyl-UDP + alpha,alpha-trehalose 6-phosphate + H(+). It carries out the reaction D-glucose 6-phosphate + UDP-alpha-D-glucose = alpha,alpha-trehalose 6-phosphate + UDP + H(+). It participates in glycan biosynthesis; trehalose biosynthesis. In terms of biological role, probably involved in the osmoprotection via the biosynthesis of trehalose and in the production of glycogen and alpha-glucan via the TreS-Pep2 branch involved in the biosynthesis of maltose-1-phosphate (M1P). Catalyzes the transfer of glucose from UDP-glucose (UDP-Glc) to D-glucose 6-phosphate (Glc-6-P) to form trehalose-6-phosphate. Probably also able to use ADP-Glc, CDP-Glc, GDP-Glc and TDP-Glc as glucosyl donors. In Mycobacterium avium (strain 104), this protein is Trehalose-6-phosphate synthase.